The chain runs to 97 residues: uncharacterized protein (97 aa).

A run of 3 helical transmembrane segments spans residues 5 to 25, 49 to 71, and 75 to 92; these read INYL…FVGI, IAGY…SFQG, and LIPP…IYVN.

Its subcellular location is the cell membrane. This is an uncharacterized protein from Bacillus subtilis (strain 168).